Here is a 484-residue protein sequence, read N- to C-terminus: EF-hand calcium-binding domain-containing protein 14 (484 aa).

3 disordered regions span residues 1–48 (MKKR…TDEE), 227–255 (GSME…HSES), and 313–395 (EQRT…FTSD). Over residues 37–48 (PDSDSESSTDEE) the composition is skewed to acidic residues. Composition is skewed to polar residues over residues 228-239 (SMENNGSNQILP), 315-324 (RTNVSSSTME), and 335-347 (LVTN…QAQS). EF-hand domains follow at residues 423–452 (SSIK…WNSL) and 453–484 (GSAM…ALGI). D466, N468, D470, R472, and E477 together coordinate Ca(2+).

This chain is EF-hand calcium-binding domain-containing protein 14 (Efcab14), found in Mus musculus (Mouse).